Here is a 245-residue protein sequence, read N- to C-terminus: Adapter protein MecA (245 aa).

Belongs to the MecA family. In terms of assembly, homodimer.

Functionally, enables the recognition and targeting of unfolded and aggregated proteins to the ClpC protease or to other proteins involved in proteolysis. This chain is Adapter protein MecA, found in Streptococcus pneumoniae serotype 4 (strain ATCC BAA-334 / TIGR4).